We begin with the raw amino-acid sequence, 484 residues long: Replication-associated protein (484 aa).

The Nuclear localization signal signature appears at 146 to 153 (IRKYHQSV).

It localises to the host nucleus. In terms of biological role, plays an essential for the replication of viral DNA. Presumably cleaves viral genomic dsRNA replicative form to initiate rolling circle replication. The protein is Replication-associated protein of Chaetoceros (Chaetoceros sp. DNA virus 7).